The sequence spans 448 residues: Glucose-6-phosphate isomerase (448 aa).

The active-site Proton donor is E290. Residues H311 and K425 contribute to the active site.

Belongs to the GPI family.

The protein localises to the cytoplasm. The catalysed reaction is alpha-D-glucose 6-phosphate = beta-D-fructose 6-phosphate. The protein operates within carbohydrate biosynthesis; gluconeogenesis. It participates in carbohydrate degradation; glycolysis; D-glyceraldehyde 3-phosphate and glycerone phosphate from D-glucose: step 2/4. Catalyzes the reversible isomerization of glucose-6-phosphate to fructose-6-phosphate. The polypeptide is Glucose-6-phosphate isomerase (Levilactobacillus brevis (strain ATCC 367 / BCRC 12310 / CIP 105137 / JCM 1170 / LMG 11437 / NCIMB 947 / NCTC 947) (Lactobacillus brevis)).